The primary structure comprises 863 residues: MQYPFQEVESFWQKFWEEHKSFQTNIRSSKPKFYCLDMFPYPSGAGLHVGHPEGYTATDILSRFKRMKGFEVLHPMGWDAFGLPAERYAMQTGIHPAITTKDNIDNFRRQIQMIGLSYDWSRELSTTDPDYYKFTQWIFIQLYQSWFNPELKKAESINELIRRFSNQGSNGLDYRQFNSEEWKNFSPVEKEKILSDFRLVYQAEIPVNWCEALGTVLANEEVEEWVGKGYEVVRKPMRQYMMRITAYADRLLEDLELVEWPPSTLEMQKNWIGKSEGLEITFPFLKPLQSGLEGIRIFTTRPDTIFGVTYMVVAPEHPIVSEITTPEQKQKVEEYQKTSSLKSDLDRMELNKEKTGVFTGTFVFNPADPSQKIPVWISDYVLYGYGTGAIMAVPAHDQRDFEFARTFGLKIIPVIEGEISEAAFDSKTSTCINSSSSEISINGLDYTSASSKIISWAESKKIGRKKIQFKLRDWLFARQRYWGEPIPLVHYPSGVTKPIPESELPLVLPNLEEFKPSGTGESPLALAKDWLQYKDPSTGEIGTRETNTMPQWAGSCWYYLRYIDPKNGRFLCDPELEKKWMPVNLYVGGSEHAVLHLLYSRFWHKFLFDIGAVSTKEPFDKLIHQGLILGEDKRKMSKSLGNVVNPDDVIKEYGADSLRLFEMFMGPLEMVKPWSTRGVEGVFRFLNRIWRLFHSGSQESFRLDDVEPTPEELKILHKTIQKVNEDIPNFSFNTAIAQLMIFVNEFTPSDRRPKKVLESFILLLAPFAPHIAEELWKRSGKMESLSYEKFPEADPQYLVESEILIVVQVNGKLRDEFKAPKDVSQSDAISMAKNLDKIKGILEGKTIRKEIYVPGKLVNLVIG.

The short motif at 40–51 (PYPSGAGLHVGH) is the 'HIGH' region element. Residues 635–639 (KMSKS) carry the 'KMSKS' region motif. Lysine 638 is a binding site for ATP.

The protein belongs to the class-I aminoacyl-tRNA synthetase family.

The protein resides in the cytoplasm. The catalysed reaction is tRNA(Leu) + L-leucine + ATP = L-leucyl-tRNA(Leu) + AMP + diphosphate. This chain is Leucine--tRNA ligase, found in Leptospira interrogans serogroup Icterohaemorrhagiae serovar copenhageni (strain Fiocruz L1-130).